The sequence spans 240 residues: Putative S-adenosylmethionine-dependent methyltransferase RcsF (240 aa).

Positions 5–142 (ISPIGHVRSC…YVPYADIVPD (138 aa)) constitute a TsaA-like domain. S-adenosyl-L-methionine-binding positions include 22-24 (PRQ), 63-64 (HQ), arginine 91, and 122-125 (LDGT).

Belongs to the tRNA methyltransferase O family.

The sequence is that of Putative S-adenosylmethionine-dependent methyltransferase RcsF (rcsF) from Pseudomonas aeruginosa.